We begin with the raw amino-acid sequence, 197 residues long: UPF0228 protein MA_3125 (197 aa).

It belongs to the UPF0228 family.

The protein is UPF0228 protein MA_3125 of Methanosarcina acetivorans (strain ATCC 35395 / DSM 2834 / JCM 12185 / C2A).